The following is a 395-amino-acid chain: Crh-like protein 5 (395 aa).

A signal peptide spans 1 to 19 (MYFKYTAAALAAVLPLCSA). Cysteine 25 and cysteine 32 form a disulfide bridge. Residues 45 to 230 (ADFTSASALD…WAGGLTDYSA (186 aa)) form the GH16 domain. The active-site Nucleophile is glutamate 119. Glutamate 123 serves as the catalytic Proton donor. Positions 123, 203, 207, and 218 each coordinate chitin. The tract at residues 271-374 (ISSSSSVTSS…PELSQGAAGS (104 aa)) is disordered. Low complexity-rich tracts occupy residues 272–338 (SSSS…SNTG) and 348–364 (GSSS…ASAT). N-linked (GlcNAc...) asparagine glycosylation occurs at asparagine 319. Glycine 370 is lipidated: GPI-like-anchor amidated glycine. Residues 371 to 395 (AAGSIKGSVTACALVFGAVAAVLAF) constitute a propeptide, removed in mature form.

It belongs to the glycosyl hydrolase 16 family. CRH1 subfamily. In terms of processing, the GPI-like anchor contains a phosphoceramide lipid group. The anchor position has not been determined.

It localises to the cell membrane. Its subcellular location is the secreted. The protein resides in the cell wall. The catalysed reaction is Random endo-hydrolysis of N-acetyl-beta-D-glucosaminide (1-&gt;4)-beta-linkages in chitin and chitodextrins.. Its function is as follows. Dual chitinase/transglycosylase that plays a role in cell wall architecture. Chitinase and transglycosylase activities are coupled. Required for the polysaccharide cross-linking at the septa and the cell wall. More specifically, transfers chitin to 1,6-beta-glucan in the cell wall. Chr5 shows acceptor substrate promiscuity and is also able to cross-link chitin to chitin. The sequence is that of Crh-like protein 5 from Aspergillus fumigatus (strain ATCC MYA-4609 / CBS 101355 / FGSC A1100 / Af293) (Neosartorya fumigata).